A 227-amino-acid chain; its full sequence is Ribosomal RNA large subunit methyltransferase E (227 aa).

The S-adenosyl-L-methionine site is built by Gly-78, Trp-80, Asp-103, Asp-119, and Asp-143. The Proton acceptor role is filled by Lys-183.

This sequence belongs to the class I-like SAM-binding methyltransferase superfamily. RNA methyltransferase RlmE family.

It is found in the cytoplasm. The catalysed reaction is uridine(2552) in 23S rRNA + S-adenosyl-L-methionine = 2'-O-methyluridine(2552) in 23S rRNA + S-adenosyl-L-homocysteine + H(+). Specifically methylates the uridine in position 2552 of 23S rRNA at the 2'-O position of the ribose in the fully assembled 50S ribosomal subunit. In Rickettsia bellii (strain RML369-C), this protein is Ribosomal RNA large subunit methyltransferase E.